The following is a 530-amino-acid chain: Estrogen receptor beta (530 aa).

A modulating region spans residues 1 to 148; it reads MEIKNSPSSL…SPNAKRDAHF (148 aa). A Phosphoserine; alternate modification is found at S61. O-linked (GlcNAc) serine; alternate glycosylation occurs at S61. A phosphoserine; by MAPK mark is found at S87 and S105. 2 consecutive NR C4-type zinc fingers follow at residues 149–169 and 185–209; these read CPVC…CEGC and CPAT…LRKC. A DNA-binding region (nuclear receptor) is located at residues 149–214; it reads CPVCSDYASG…RLRKCYEVGM (66 aa). The NR LBD domain maps to 264–498; the sequence is SPEQLVLTLL…DLLLEMLNAH (235 aa). Low complexity predominate over residues 506–515; the sequence is SISGSECSST. Residues 506–530 form a disordered region; that stretch reads SISGSECSSTEDSKNKESSQNLQSQ.

This sequence belongs to the nuclear hormone receptor family. NR3 subfamily. As to quaternary structure, binds DNA as a homodimer. Can form a heterodimer with ESR1. Interacts with NCOA1, NCOA3, NCOA5 and NCOA6 coactivators, leading to a strong increase of transcription of target genes. Interacts with UBE1C and AKAP13. Interacts with DNTTIP2. Interacts with CCDC62 in the presence of estradiol/E2; this interaction seems to enhance the transcription of target genes. Interacts with PRMT2. Interacts with CCAR2 (via N-terminus) in a ligand-independent manner. Interacts with DNAAF4. Interacts with RBM39, in the presence of estradiol (E2). Interacts with STUB1/CHIP. Post-translationally, phosphorylation at Ser-87 and Ser-105 recruits NCOA1. In terms of tissue distribution, expressed in the CA1 region of the hippocampus, expression decreases with age (at protein level). Expressed in prostate, ovary, lung, liver, kidney, fat, bone, brain, uterus and testis.

The protein resides in the nucleus. Nuclear hormone receptor. Binds estrogens with an affinity similar to that of ESR1/ER-alpha, and activates expression of reporter genes containing estrogen response elements (ERE) in an estrogen-dependent manner. Its function is as follows. Lacks ligand binding affinity and suppresses ESR1/ER-alpha and ESR2 isoform 1/ER-beta1 mediated transcriptional activation and may act as a dominant negative regulator of estrogen action. In terms of biological role, unable to bind DNA and activate transcription due to the truncation of the DNA binding domain. The polypeptide is Estrogen receptor beta (Esr2) (Rattus norvegicus (Rat)).